The sequence spans 119 residues: Acidic phospholipase A2 CM-II (119 aa).

Disulfide bonds link Cys-11-Cys-71, Cys-26-Cys-118, Cys-28-Cys-44, Cys-43-Cys-99, Cys-50-Cys-92, Cys-60-Cys-85, and Cys-78-Cys-90. Residues Phe-27, Gly-29, and Gly-31 each contribute to the Ca(2+) site. Residue His-47 is part of the active site. Position 48 (Asp-48) interacts with Ca(2+). Asp-93 is an active-site residue.

This sequence belongs to the phospholipase A2 family. Group I subfamily. D49 sub-subfamily. It depends on Ca(2+) as a cofactor. In terms of tissue distribution, expressed by the venom gland.

Its subcellular location is the secreted. It catalyses the reaction a 1,2-diacyl-sn-glycero-3-phosphocholine + H2O = a 1-acyl-sn-glycero-3-phosphocholine + a fatty acid + H(+). PLA2 catalyzes the calcium-dependent hydrolysis of the 2-acyl groups in 3-sn-phosphoglycerides. The polypeptide is Acidic phospholipase A2 CM-II (Aspidelaps scutatus (Shield-nose snake)).